The primary structure comprises 341 residues: D-aspartate oxidase (341 aa).

Asp-36, Arg-37, Thr-43, Ser-44, Met-50, Gly-307, Ile-311, and Ser-312 together coordinate FAD. Positions 339-341 (SKL) match the Microbody targeting signal motif.

Belongs to the DAMOX/DASOX family. In terms of assembly, dimer or tetramer. Interacts with PEX5; the interaction is direct and required for localization of DDO to the peroxisome. It depends on FAD as a cofactor. As to expression, expressed in the small intestine (at protein level). Expressed in the ependymal cell layer of the telencephalic ventricles, hippocampus, thalamus, cerebellum, midbrain region, pons, olfactory bulbs, and cortex. Repressed in the testis. In terms of tissue distribution, expressed in the kidney, liver, stomach, pancreas, uterus, lactating breast, involuting mammary gland, brain, heart, lung, and skin. Expressed in kidney, liver, pancreas, and in the mammary gland regardless of lactation status.

Its subcellular location is the peroxisome matrix. The protein localises to the cytoplasm. It localises to the cytosol. The enzyme catalyses D-aspartate + O2 + H2O = oxaloacetate + H2O2 + NH4(+). It catalyses the reaction D-glutamate + O2 + H2O = H2O2 + 2-oxoglutarate + NH4(+). With respect to regulation, inhibited by the benzodiazepine olanzapine; chronic systemic administration of the benzodiazepine increases levels of D-aspartate and L-glutamate in the prefrontal cortex. Efficiently inhibited by 5-aminonicotinic acid (5-AN) and 1,4-Dihydropyrido[2,3-b]pyrazine-2,3-dione (DPPD). Inhibited by aminooxyacetic acid, thiolactomycin, anthranilic acid, malonate, meso-tartrate and L-tartrate. Benzoate has no effect on activity. Selectively catalyzes the oxidative deamination of acidic amino acids. Suppresses the level of D-aspartate in the brain, an amino acid that can act as an agonist for glutamate receptors. Protects the organism from the toxicity of D-amino acids. May also function in the intestine. In terms of biological role, selectively catalyzes the oxidative deamination of acidic amino acids. Functionally, does not exhibit D-aspartate oxidase activity. This chain is D-aspartate oxidase (Ddo), found in Mus musculus (Mouse).